A 161-amino-acid polypeptide reads, in one-letter code: Type IV major fimbrial protein FimA (161 aa).

Residues 1 to 7 (MKSLQKG) constitute a propeptide, leader sequence. Phe-8 carries the N-methylphenylalanine modification. Residues 8–28 (FTLIELMIVVAIIGILAAFAI) form a helical membrane-spanning segment. Cysteines 63 and 106 form a disulfide.

This sequence belongs to the N-Me-Phe pilin family. The pili are polar flexible filaments of about 5.4 nanometers diameter and 2.5 micrometers average length; they consist of only a single polypeptide chain arranged in a helical configuration of five subunits per turn in the assembled pilus.

The protein localises to the fimbrium. Its subcellular location is the membrane. Functionally, major component of the type IV fimbriae that plays an essential role in twitching motility, natural transformation, and protease secretion. The polypeptide is Type IV major fimbrial protein FimA (fimA) (Dichelobacter nodosus (Bacteroides nodosus)).